Consider the following 802-residue polypeptide: Endoplasmin (802 aa).

The first 21 residues, 1-21 (MRVLWVLGLCCVLLTFGFVRA), serve as a signal peptide directing secretion. Residues 42–44 (SRT) carry the SRT pseudosubstrate motif motif. N62 carries an N-linked (GlcNAc...) asparagine glycan. Position 64 is a phosphoserine (S64). The N-linked (GlcNAc...) asparagine glycan is linked to N107. Residues N107, D149, and N162 each coordinate ATP. K168 bears the N6-(2-hydroxyisobutyryl)lysine mark. The residue at position 172 (S172) is a Phosphoserine. Residue F199 coordinates ATP. Residue N217 is glycosylated (N-linked (GlcNAc...) asparagine). A compositionally biased stretch (acidic residues) spans 290-317 (EEPLEEDEAAKEEKEESDDEAAVEEEEE). A disordered region spans residues 290-323 (EEPLEEDEAAKEEKEESDDEAAVEEEEEEKKPKT). 2 positions are modified to phosphoserine: S306 and S403. N6-succinyllysine is present on K404. Residue N445 is glycosylated (N-linked (GlcNAc...) asparagine). S447 carries the post-translational modification Phosphoserine. Residue K479 is modified to N6-acetyllysine. N481 and N502 each carry an N-linked (GlcNAc...) asparagine glycan. Residue K633 is modified to N6-succinyllysine. The tract at residues 749–802 (IDPEAQVEEEPEEEPEDTSEDAEDSEQDEGEEMDAGTEEEEEETEKESTEKDEL) is disordered. A compositionally biased stretch (acidic residues) spans 753 to 793 (AQVEEEPEEEPEDTSEDAEDSEQDEGEEMDAGTEEEEEETE). At T785 the chain carries Phosphothreonine. The Prevents secretion from ER signature appears at 799-802 (KDEL).

Belongs to the heat shock protein 90 family. As to quaternary structure, homodimer; disulfide-linked. Component of an EIF2 complex at least composed of CELF1/CUGBP1, CALR, CALR3, EIF2S1, EIF2S2, HSP90B1 and HSPA5. Part of a large chaperone multiprotein complex comprising DNAJB11, HSP90B1, HSPA5, HYOU, PDIA2, PDIA4, PDIA6, PPIB, SDF2L1, UGGT1 and very small amounts of ERP29, but not, or at very low levels, CALR nor CANX. Hyperglycosylated form interacts with OS9; promoting its degradation by the endoplasmic reticulum associated degradation (ERAD). Interacts with AIMP1; regulates its retention in the endoplasmic reticulum. Interacts with CNPY3; this interaction is disrupted in the presence of ATP. Interacts with TLR4, TLR9 and TLR11, but not with TLR3. Interacts with MZB1 in a calcium-dependent manner. Interacts with METTL23. Interacts with IL1B; the interaction facilitates cargo translocation into the ERGIC. Interacts with EIF2AK3. In terms of processing, phosphorylated by CK2. N-glycosylated cotranslationally at Asn-217 by STT3A-containing OST-A complex: this glycosylation is constitutive. In response to various stress, 5 additional facultative sites (Asn-62, Asn-107, Asn-445, Asn-481 and Asn-502) can be glycosylated post-translationally by STT3B-containing OST-B complex, leading to a hyperglycosylated form that is degraded by the ER-associated degradation (ERAD) pathway. In normal conditions, the OST-A complex together with CCDC134 prevent glycosylation at facultative sites during protein folding, thereby preventing hyperglycosylation. Mechanistically, nascent HSP90B1 is tethered during translation to a specialized CCDC134-containing translocon that forms a microenvironment for its folding, in which STT3A associates with the SRT pseudosubstrate motif, and prevents access to facultative glycosylation sites until folding is completed, rendering its facultative sites inaccessible to the OST-B complex.

It localises to the endoplasmic reticulum lumen. Its subcellular location is the sarcoplasmic reticulum lumen. The protein localises to the melanosome. It catalyses the reaction ATP + H2O = ADP + phosphate + H(+). In terms of biological role, ATP-dependent chaperone involved in the processing of proteins in the endoplasmic reticulum, regulating their transport. Together with MESD, acts as a modulator of the Wnt pathway by promoting the folding of LRP6, a coreceptor of the canonical Wnt pathway. When associated with CNPY3, required for proper folding of Toll-like receptors. Promotes folding and trafficking of TLR4 to the cell surface. May participate in the unfolding of cytosolic leaderless cargos (lacking the secretion signal sequence) such as the interleukin 1/IL-1 to facilitate their translocation into the ERGIC (endoplasmic reticulum-Golgi intermediate compartment) and secretion; the translocation process is mediated by the cargo receptor TMED10. This is Endoplasmin (Hsp90b1) from Mus musculus (Mouse).